Reading from the N-terminus, the 89-residue chain is UPF0237 protein CE1668 (89 aa).

One can recognise an ACT domain in the interval 4 to 78 (IMTVTGQDHT…KEQGLVIRIQ (75 aa)).

This sequence belongs to the UPF0237 family.

The sequence is that of UPF0237 protein CE1668 from Corynebacterium efficiens (strain DSM 44549 / YS-314 / AJ 12310 / JCM 11189 / NBRC 100395).